The primary structure comprises 220 residues: Ribonuclease HII (220 aa).

The RNase H type-2 domain maps to 32 to 220 (KHIAGIDEAG…FAPIKGRFDC (189 aa)). A divalent metal cation-binding residues include aspartate 38, glutamate 39, and aspartate 130.

The protein belongs to the RNase HII family. It depends on Mn(2+) as a cofactor. Mg(2+) serves as cofactor.

The protein resides in the cytoplasm. The catalysed reaction is Endonucleolytic cleavage to 5'-phosphomonoester.. Functionally, endonuclease that specifically degrades the RNA of RNA-DNA hybrids. This is Ribonuclease HII from Brucella ovis (strain ATCC 25840 / 63/290 / NCTC 10512).